The following is a 450-amino-acid chain: IMP-specific 5'-nucleotidase 1 (450 aa).

Position 144 (His144) interacts with ATP. Asp172 functions as the Nucleophile in the catalytic mechanism. IMP is bound by residues Asp172, Asp174, Asp180, Thr208, Asp376, and Lys384. Asp172 and Asp174 together coordinate Mg(2+). Asp174 serves as the catalytic Proton donor. Residue Asp411 coordinates Mg(2+).

The protein belongs to the ISN1 family. In terms of assembly, homotetramer. The cofactor is Mg(2+).

The catalysed reaction is IMP + H2O = inosine + phosphate. With respect to regulation, allosterically activated by ATP. ATP binding is a prerequisite to magnesium and substrate binding. ATP binds to 2 of the subunits in the homotetramer inducing a closure of these 2 subunits and the release of the C-terminal loop, thereby activating the enzyme. In terms of biological role, IMP-specific 5'-nucleotidase involved in IMP (inosine 5'-phosphate) degradation. In Saccharomyces cerevisiae (strain ATCC 204508 / S288c) (Baker's yeast), this protein is IMP-specific 5'-nucleotidase 1 (ISN1).